An 870-amino-acid chain; its full sequence is MISNSINVTPNKESKMYVVKRDGTKENVSFDKITSRISFLCEMEPKLNSDIVDPIEVAQKVVSGVFPGVKTTELDNLAAETAAYMSTRHPDYGILAARISVSNLHKQTSKSFVETVKKQYEFINPKSNLLAPLVSKELYEIVMKHGERLESVIDYYRDFDYDFFGFKTLERSYLHRINGKIVERPQHMLMRVSIGIHGEDLESAINTYKRLSEKLFTHATPTLFNAGTPSPQMSSCFLVQMKEDSIDGIYDTLKQCALISKSAGGIGIAVHKIRAAQSYIRGTNGTSNGLVPMLRVFNDTARYVDQGGGKRKGAFAVYLEPWHADVFEFIDLKKNTGKEEMRARDLFYALWVSDIFMERVEQNGDWALFCPNEAPGLAETHSEEHRALYLKYEATPDLPRRVIKAQELWFAIMESQVETGTPFILYKDACNAKSNQKNLGTISSSNLCTEIIQYTSPDEIAVCNLASIALPKFVRQKVGSTDPKEKEFDHQFLFEITKLITVNLNVIIDRNYYPVAEAKTSNLRHRPIGIGIQGLADVFIKMRMPFDSVAAAKLNVEIAETIYFAALTASHELAIRDGTYESFKGSPASKGILQFDMWNVTPSSRWNWAELKDNIVNKGGLRNSLLIAPMPTASTSQILGNNECFEPYTSNIYSRRVLAGEFTIVNKQLLEDLMELGIWSPEMKNQIVAARGSIQSIGGIPDDLKELYKTVWEIRQRTLIDMAADRGAFIDQSQSFNVFIAEPTFAKLTSMHFYSWKKGLKTGMYYLRTRPAADAIQFTVDPIVSQTPKPVENNINSTTPLKTPTKTPNSSNRISTSPTNNLTSPIRFNITQQQQQQQQQQQQQNNNEDDLANYDGMTCRREEGCLVCGS.

The ATP-cone domain occupies 16–110 (MYVVKRDGTK…VSNLHKQTSK (95 aa)). Residues 20–21 (KR), 26–32 (ENVSFDK), Thr71, and Asp75 each bind ATP. Ser235 serves as a coordination point for GDP. Residues Cys236 and Cys463 are joined by a disulfide bond. DTTP is bound by residues 244-246 (DSI), Lys261, Arg274, and 281-282 (RG). Asn446 provides a ligand contact to GDP. The active-site Proton acceptor is Asn446. Cys448 serves as the catalytic Cysteine radical intermediate. GDP is bound by residues Glu450 and 632–635 (TAST). Glu450 (proton acceptor) is an active-site residue. The segment at 789–854 (KPVENNINST…NNNEDDLANY (66 aa)) is disordered. The span at 796–811 (NSTTPLKTPTKTPNSS) shows a compositional bias: low complexity. Residues 812–831 (NRISTSPTNNLTSPIRFNIT) are compositionally biased toward polar residues. A compositionally biased stretch (low complexity) spans 832–844 (QQQQQQQQQQQQQ).

The protein belongs to the ribonucleoside diphosphate reductase large chain family. As to quaternary structure, heterodimer of a large and a small subunit.

The protein resides in the cytoplasm. It carries out the reaction a 2'-deoxyribonucleoside 5'-diphosphate + [thioredoxin]-disulfide + H2O = a ribonucleoside 5'-diphosphate + [thioredoxin]-dithiol. Its activity is regulated as follows. Under complex allosteric control mediated by deoxynucleoside triphosphates and ATP binding to separate specificity and activation sites on the large subunit. The type of nucleotide bound at the specificity site determines substrate preference. It seems probable that ATP makes the enzyme reduce CDP and UDP, dGTP favors ADP reduction and dTTP favors GDP reduction. Stimulated by ATP and inhibited by dATP binding to the activity site. Its function is as follows. Provides the precursors necessary for DNA synthesis. Catalyzes the biosynthesis of deoxyribonucleotides from the corresponding ribonucleotides. The chain is Ribonucleoside-diphosphate reductase large subunit (rnrA) from Dictyostelium discoideum (Social amoeba).